The sequence spans 520 residues: Protein RCC2 (520 aa).

Residues 1 to 78 (MPRKKGAAWE…RPATAGKAAG (78 aa)) are disordered. Residue S14 is modified to Phosphoserine. T18 carries the post-translational modification Phosphothreonine. The segment covering 22–34 (GPRRRGGPAGRKR) has biased composition (basic residues). Residues S41, S42, S43, S44, S48, and S49 each carry the phosphoserine modification. The segment covering 69-78 (RPATAGKAAG) has biased composition (low complexity). K90 and K122 each carry N6-acetyllysine. 7 RCC1 repeats span residues 101 to 163 (KGQL…SLLI), 166 to 217 (EGKL…ALTD), 219 to 269 (GSVF…LMDC), 271 to 345 (GNLY…VLDS), 346 to 399 (QKRV…AVSE), 401 to 445 (GGLF…VAAD), and 446 to 499 (ESTI…VIAR). K291 carries the post-translational modification N6-acetyllysine. The segment at 316-323 (KTKDGQIL) is required for interaction with RAC1. Position 340 is a phosphothreonine (T340). Residue K375 is modified to N6-acetyllysine.

In terms of assembly, interacts with RAC1. Interacts with nucleotide-free and with GDP and GTP-bound forms of RAC1, with a slight preference for GDP-bound RAC1. Binds preferentially to the nucleotide-free form of RAC1. Interacts with CORO1C. Interacts with microtubules.

It is found in the nucleus. Its subcellular location is the nucleolus. It localises to the cytoplasm. The protein localises to the cytoskeleton. The protein resides in the chromosome. It is found in the centromere. Its subcellular location is the spindle. It localises to the midbody. The protein localises to the cell membrane. Multifunctional protein that may affect its functions by regulating the activity of small GTPases, such as RAC1 and RALA. Required for normal progress through the cell cycle, both during interphase and during mitosis. Required for the presence of normal levels of MAD2L1, AURKB and BIRC5 on inner centromeres during mitosis, and for normal attachment of kinetochores to mitotic spindles. Required for normal organization of the microtubule cytoskeleton in interphase cells. Functions as a guanine nucleotide exchange factor (GEF) for RALA. Interferes with the activation of RAC1 by guanine nucleotide exchange factors. Prevents accumulation of active, GTP-bound RAC1, and suppresses RAC1-mediated reorganization of the actin cytoskeleton and formation of membrane protrusions. Required for normal cellular responses to contacts with the extracellular matrix of adjacent cells, and for directional cell migration in response to a fibronectin gradient (in vitro). This Mus musculus (Mouse) protein is Protein RCC2 (Rcc2).